We begin with the raw amino-acid sequence, 208 residues long: Small ribosomal subunit protein uS4 (208 aa).

The tract at residues 31-50 (SALDKRAYGPGQHGQRRTKT) is disordered. Positions 98–161 (RRLDNVVYRM…KSNPQVVRAM (64 aa)) constitute an S4 RNA-binding domain.

The protein belongs to the universal ribosomal protein uS4 family. In terms of assembly, part of the 30S ribosomal subunit. Contacts protein S5. The interaction surface between S4 and S5 is involved in control of translational fidelity.

In terms of biological role, one of the primary rRNA binding proteins, it binds directly to 16S rRNA where it nucleates assembly of the body of the 30S subunit. Its function is as follows. With S5 and S12 plays an important role in translational accuracy. The sequence is that of Small ribosomal subunit protein uS4 from Helicobacter pylori (strain J99 / ATCC 700824) (Campylobacter pylori J99).